Here is a 367-residue protein sequence, read N- to C-terminus: Chorismate synthase (367 aa).

Positions 48 and 54 each coordinate NADP(+). FMN contacts are provided by residues 125 to 127, 238 to 239, glycine 278, 293 to 297, and arginine 319; these read RSS, NA, and KPTSS.

It belongs to the chorismate synthase family. Homotetramer. FMNH2 is required as a cofactor.

The enzyme catalyses 5-O-(1-carboxyvinyl)-3-phosphoshikimate = chorismate + phosphate. The protein operates within metabolic intermediate biosynthesis; chorismate biosynthesis; chorismate from D-erythrose 4-phosphate and phosphoenolpyruvate: step 7/7. Its function is as follows. Catalyzes the anti-1,4-elimination of the C-3 phosphate and the C-6 proR hydrogen from 5-enolpyruvylshikimate-3-phosphate (EPSP) to yield chorismate, which is the branch point compound that serves as the starting substrate for the three terminal pathways of aromatic amino acid biosynthesis. This reaction introduces a second double bond into the aromatic ring system. This chain is Chorismate synthase, found in Stenotrophomonas maltophilia (strain R551-3).